The primary structure comprises 382 residues: ATP phosphoribosyltransferase regulatory subunit (382 aa).

The protein belongs to the class-II aminoacyl-tRNA synthetase family. HisZ subfamily. As to quaternary structure, heteromultimer composed of HisG and HisZ subunits.

It is found in the cytoplasm. Its pathway is amino-acid biosynthesis; L-histidine biosynthesis; L-histidine from 5-phospho-alpha-D-ribose 1-diphosphate: step 1/9. Required for the first step of histidine biosynthesis. May allow the feedback regulation of ATP phosphoribosyltransferase activity by histidine. In Burkholderia pseudomallei (strain 1106a), this protein is ATP phosphoribosyltransferase regulatory subunit.